A 149-amino-acid polypeptide reads, in one-letter code: Hut operon positive regulatory protein (149 aa).

Belongs to the HutP family. In terms of assembly, homohexamer.

Functionally, antiterminator that binds to cis-acting regulatory sequences on the mRNA in the presence of histidine, thereby suppressing transcription termination and activating the hut operon for histidine utilization. The chain is Hut operon positive regulatory protein from Geobacillus thermodenitrificans (strain NG80-2).